A 772-amino-acid polypeptide reads, in one-letter code: Metal transporter CNNM4 (772 aa).

Residues 1–175 (MAPGGGGGRR…SLLFMVEEHG (175 aa)) are Extracellular-facing. N-linked (GlcNAc...) asparagine glycosylation occurs at asparagine 120. The chain crosses the membrane as a helical span at residues 176–196 (RFLPLWLHILLVLVLLVLSGI). The CNNM transmembrane domain maps to 176 to 356 (RFLPLWLHIL…EPYNDLVKEE (181 aa)). The Cytoplasmic segment spans residues 197–237 (FSGLNLGLMALDPMELRIVQNCGTEKERRYARKIEPIRRKG). The segment at residues 238–258 (NYLLCSLLLGNVLVNTSLTIL) is an intramembrane region (helical). Residues 259–261 (LDN) are Cytoplasmic-facing. A helical transmembrane segment spans residues 262 to 282 (LIGSGIMAVASSTIGIVIFGE). Topologically, residues 283–290 (ILPQALCS) are extracellular. A helical transmembrane segment spans residues 291–313 (RHGLAVGANTIVLTKIFMLLTFP). Residues 314–772 (LSFPISKLLD…LHRASQEGTI (459 aa)) are Cytoplasmic-facing. CBS domains lie at 375-436 (MTQL…CTPL) and 443-509 (YNHP…ILDE). The tract at residues 647–676 (PDRSPAHPTPLSRSASLSYPDRNTDMTPSS) is disordered. Phosphoserine occurs at positions 658, 662, and 767.

The protein belongs to the ACDP family. In terms of assembly, interacts with COX11. Present in spinal cord dorsal horn neurons and in developing teeth (at protein level). In the tooth, higher expression is found in the ameloblasts during the transition and maturation phases of amelogenesis; reduced expression in the odontoblasts.

The protein localises to the cell membrane. Functionally, probable metal transporter. The interaction with the metal ion chaperone COX11 suggests that it may play a role in sensory neuron functions. May play a role in biomineralization and retinal function. This is Metal transporter CNNM4 (Cnnm4) from Rattus norvegicus (Rat).